Consider the following 756-residue polypeptide: Putative beta-xylosidase (756 aa).

The signal sequence occupies residues 1–18; that stretch reads MKKLLFTFLVSTGTIFFS. Cys-19 carries the N-palmitoyl cysteine lipid modification. Cys-19 carries S-diacylglycerol cysteine lipidation.

It belongs to the glycosyl hydrolase 3 family.

Its subcellular location is the cell outer membrane. Glycoside hydrolase probably involved in ulvan degradation. Ulvan is the main polysaccharide component of the Ulvales (green seaweed) cell wall. It is composed of disaccharide building blocks comprising 3-sulfated rhamnose (Rha3S) linked to D-glucuronic acid (GlcA), L-iduronic acid (IduA), or D-xylose (Xyl). The protein is Putative beta-xylosidase of Formosa agariphila (strain DSM 15362 / KCTC 12365 / LMG 23005 / KMM 3901 / M-2Alg 35-1).